The chain runs to 365 residues: Cyclin-O protein B (365 aa).

The disordered stretch occupies residues 22-64; the sequence is SGKRKRDSVYSPGDATPGDRGEGEPKCPSVGTKKRAKYSRHRK. Over residues 53–64 the composition is skewed to basic residues; sequence TKKRAKYSRHRK.

This sequence belongs to the cyclin family.

The protein resides in the cytoplasm. Functionally, specifically required for generation of multiciliated cells, possibly by promoting a cell cycle state compatible with centriole amplification and maturation. Acts downstream of mcidas to promote mother centriole amplification and maturation in preparation for apical docking. This chain is Cyclin-O protein B (ccno-b), found in Xenopus laevis (African clawed frog).